We begin with the raw amino-acid sequence, 448 residues long: Trigger factor (448 aa).

One can recognise a PPIase FKBP-type domain in the interval 172 to 257 (GDRVTVDFVG…MKKIEWPHLP (86 aa)).

This sequence belongs to the FKBP-type PPIase family. Tig subfamily.

Its subcellular location is the cytoplasm. It catalyses the reaction [protein]-peptidylproline (omega=180) = [protein]-peptidylproline (omega=0). In terms of biological role, involved in protein export. Acts as a chaperone by maintaining the newly synthesized protein in an open conformation. Functions as a peptidyl-prolyl cis-trans isomerase. In Burkholderia lata (strain ATCC 17760 / DSM 23089 / LMG 22485 / NCIMB 9086 / R18194 / 383), this protein is Trigger factor.